The primary structure comprises 598 residues: Aspartate--tRNA ligase (598 aa).

Glu175 is an L-aspartate binding site. The interval 199–202 (QLFK) is aspartate. Arg221 serves as a coordination point for L-aspartate. Residues 221 to 223 (RDE) and Gln230 contribute to the ATP site. His450 is an L-aspartate binding site. Glu486 lines the ATP pocket. Arg493 lines the L-aspartate pocket. Position 538–541 (538–541 (GLDR)) interacts with ATP.

Belongs to the class-II aminoacyl-tRNA synthetase family. Type 1 subfamily. As to quaternary structure, homodimer.

Its subcellular location is the cytoplasm. It carries out the reaction tRNA(Asp) + L-aspartate + ATP = L-aspartyl-tRNA(Asp) + AMP + diphosphate. Catalyzes the attachment of L-aspartate to tRNA(Asp) in a two-step reaction: L-aspartate is first activated by ATP to form Asp-AMP and then transferred to the acceptor end of tRNA(Asp). The protein is Aspartate--tRNA ligase of Lactiplantibacillus plantarum (strain ATCC BAA-793 / NCIMB 8826 / WCFS1) (Lactobacillus plantarum).